Here is a 170-residue protein sequence, read N- to C-terminus: Vimentin A1 (170 aa).

Residues 1-10 (DLTEAANKSN) show a composition bias toward polar residues. The tract at residues 1-20 (DLTEAANKSNEALRLAKQES) is disordered. The coil 2 stretch occupies residues 1–111 (DLTEAANKSN…ATYRKLLEGE (111 aa)). Residues 1–115 (DLTEAANKSN…KLLEGEESRI (115 aa)) form the IF rod domain. Positions 112 to 170 (ESRISTPLPNFSSFNLRETMLELKPNIESTFTKKVLIKTIETRDGQVLNESTQNHDDLE) are tail.

The protein belongs to the intermediate filament family. As to quaternary structure, homomer. In terms of processing, one of the most prominent phosphoproteins in various cells of mesenchymal origin. Phosphorylation is enhanced during cell division, at which time vimentin filaments are significantly reorganized. As to expression, expressed in low amounts in retina, optic nerve, and brain and in higher amounts in spinal cord.

Its function is as follows. Vimentins are class-III intermediate filaments found in various non-epithelial cells, especially mesenchymal cells. Vimentin is attached to the nucleus, endoplasmic reticulum, and mitochondria, either laterally or terminally. This is Vimentin A1 from Carassius auratus (Goldfish).